Reading from the N-terminus, the 757-residue chain is Elongation factor G, mitochondrial (757 aa).

Residues 1–39 constitute a mitochondrion transit peptide; sequence MLLVPRVPVVMQGKCGLLKISRPLQGSLSRGFHFSRAHR. The tr-type G domain maps to 65–346; the sequence is QKLRNIGISA…AIVDYLPNPS (282 aa). GTP contacts are provided by residues 74-81, 145-149, and 199-202; these read AHIDSGKT, DTPGH, and NKMD.

This sequence belongs to the TRAFAC class translation factor GTPase superfamily. Classic translation factor GTPase family. EF-G/EF-2 subfamily.

Its subcellular location is the mitochondrion. It participates in protein biosynthesis; polypeptide chain elongation. In terms of biological role, mitochondrial GTPase that catalyzes the GTP-dependent ribosomal translocation step during translation elongation. During this step, the ribosome changes from the pre-translocational (PRE) to the post-translocational (POST) state as the newly formed A-site-bound peptidyl-tRNA and P-site-bound deacylated tRNA move to the P and E sites, respectively. Catalyzes the coordinated movement of the two tRNA molecules, the mRNA and conformational changes in the ribosome. The chain is Elongation factor G, mitochondrial from Candida glabrata (strain ATCC 2001 / BCRC 20586 / JCM 3761 / NBRC 0622 / NRRL Y-65 / CBS 138) (Yeast).